Here is a 712-residue protein sequence, read N- to C-terminus: Cyclomaltodextrin glucanotransferase (712 aa).

The first 27 residues, 1 to 27, serve as a signal peptide directing secretion; sequence MKRFMKLTAVWTLWLSLTLGLLSPVHA. The A1 stretch occupies residues 28–165; that stretch reads APDTSVSNKQ…NIKVIIDFAP (138 aa). Ca(2+)-binding residues include Asp-54, Asn-56, Asn-59, and Asn-60. A disulfide bond links Cys-70 and Cys-77. Residues Gly-78 and Asp-80 each coordinate Ca(2+). 127 to 128 lines the substrate pocket; it reads YW. Asn-166 is a Ca(2+) binding site. Positions 166 to 229 are b; it reads NHTSPASSDD…NLYDLADLNH (64 aa). His-167 serves as a coordination point for substrate. Ile-217 serves as a coordination point for Ca(2+). Residue 220–223 coordinates substrate; that stretch reads NLYD. A Ca(2+)-binding site is contributed by Asp-226. The tract at residues 230–433 is A2; it reads NNSSVDVYLK…LRKSNPAIAY (204 aa). Residue Arg-254 coordinates substrate. Asp-256 (nucleophile) is an active-site residue. 259–260 is a binding site for substrate; it reads KH. His-260 contacts Ca(2+). Glu-284 (proton donor) is an active-site residue. Residues His-354, Asp-398, and Arg-402 each contribute to the substrate site. The tract at residues 434–522 is c; sequence GSTQERWINN…GTAVWQYTTD (89 aa). Residues 523 to 608 form a d region; it reads ATAPINGNVG…SNIYDNFEVL (86 aa). Residues 526 to 606 enclose the IPT/TIG domain; sequence PINGNVGPMM…AASNIYDNFE (81 aa). Residues 607-712 enclose the CBM20 domain; the sequence is VLTGDQVTVR…TATVNVNWQP (106 aa). An e region spans residues 609 to 712; that stretch reads TGDQVTVRFV…TATVNVNWQP (104 aa).

It belongs to the glycosyl hydrolase 13 family. Monomer. Ca(2+) serves as cofactor.

It is found in the secreted. The catalysed reaction is Cyclizes part of a (1-&gt;4)-alpha-D-glucan chain by formation of a (1-&gt;4)-alpha-D-glucosidic bond.. This is Cyclomaltodextrin glucanotransferase (cgt) from Bacillus sp. (strain 38-2).